Here is a 353-residue protein sequence, read N- to C-terminus: Photosystem II D2 protein (353 aa).

Residue threonine 2 is modified to N-acetylthreonine. Position 2 is a phosphothreonine (threonine 2). Residues 41 to 61 (CAYFAVGGWFTGTTFVTSWYT) form a helical membrane-spanning segment. Histidine 118 contacts chlorophyll a. The helical transmembrane segment at 125 to 141 (GFMLRQFELARSVQLRP) threads the bilayer. Pheophytin a contacts are provided by glutamine 130 and asparagine 143. The chain crosses the membrane as a helical span at residues 153–166 (VFVSVFLIYPLGQS). Chlorophyll a is bound at residue histidine 198. A helical transmembrane segment spans residues 208–228 (AALLCAIHGATVENTLFEDGD). A plastoquinone-binding residues include histidine 215 and phenylalanine 262. Residue histidine 215 participates in Fe cation binding. Position 269 (histidine 269) interacts with Fe cation. A helical transmembrane segment spans residues 279 to 295 (GLWMSALGVVGLALNLR).

This sequence belongs to the reaction center PufL/M/PsbA/D family. In terms of assembly, PSII is composed of 1 copy each of membrane proteins PsbA, PsbB, PsbC, PsbD, PsbE, PsbF, PsbH, PsbI, PsbJ, PsbK, PsbL, PsbM, PsbT, PsbX, PsbY, PsbZ, Psb30/Ycf12, at least 3 peripheral proteins of the oxygen-evolving complex and a large number of cofactors. It forms dimeric complexes. The D1/D2 heterodimer binds P680, chlorophylls that are the primary electron donor of PSII, and subsequent electron acceptors. It shares a non-heme iron and each subunit binds pheophytin, quinone, additional chlorophylls, carotenoids and lipids. There is also a Cl(-1) ion associated with D1 and D2, which is required for oxygen evolution. The PSII complex binds additional chlorophylls, carotenoids and specific lipids. is required as a cofactor.

The protein localises to the plastid. Its subcellular location is the chloroplast thylakoid membrane. The enzyme catalyses 2 a plastoquinone + 4 hnu + 2 H2O = 2 a plastoquinol + O2. Its function is as follows. Photosystem II (PSII) is a light-driven water:plastoquinone oxidoreductase that uses light energy to abstract electrons from H(2)O, generating O(2) and a proton gradient subsequently used for ATP formation. It consists of a core antenna complex that captures photons, and an electron transfer chain that converts photonic excitation into a charge separation. The D1/D2 (PsbA/PsbD) reaction center heterodimer binds P680, the primary electron donor of PSII as well as several subsequent electron acceptors. D2 is needed for assembly of a stable PSII complex. This Solanum bulbocastanum (Wild potato) protein is Photosystem II D2 protein.